The sequence spans 431 residues: Enolase (431 aa).

Glutamine 167 contacts (2R)-2-phosphoglycerate. The active-site Proton donor is the glutamate 209. Mg(2+) is bound by residues aspartate 246, glutamate 290, and aspartate 317. 4 residues coordinate (2R)-2-phosphoglycerate: lysine 342, arginine 371, serine 372, and lysine 393. Lysine 342 acts as the Proton acceptor in catalysis.

It belongs to the enolase family. In terms of assembly, component of the RNA degradosome, a multiprotein complex involved in RNA processing and mRNA degradation. Mg(2+) serves as cofactor.

The protein localises to the cytoplasm. Its subcellular location is the secreted. The protein resides in the cell surface. It catalyses the reaction (2R)-2-phosphoglycerate = phosphoenolpyruvate + H2O. The protein operates within carbohydrate degradation; glycolysis; pyruvate from D-glyceraldehyde 3-phosphate: step 4/5. Its function is as follows. Catalyzes the reversible conversion of 2-phosphoglycerate (2-PG) into phosphoenolpyruvate (PEP). It is essential for the degradation of carbohydrates via glycolysis. The sequence is that of Enolase from Erwinia tasmaniensis (strain DSM 17950 / CFBP 7177 / CIP 109463 / NCPPB 4357 / Et1/99).